A 337-amino-acid chain; its full sequence is RNA 3'-terminal phosphate cyclase (337 aa).

ATP contacts are provided by residues glutamine 101 and 282–285 (HMSD). Histidine 306 (tele-AMP-histidine intermediate) is an active-site residue.

It belongs to the RNA 3'-terminal cyclase family. Type 1 subfamily.

The protein localises to the cytoplasm. The catalysed reaction is a 3'-end 3'-phospho-ribonucleotide-RNA + ATP = a 3'-end 2',3'-cyclophospho-ribonucleotide-RNA + AMP + diphosphate. In terms of biological role, catalyzes the conversion of 3'-phosphate to a 2',3'-cyclic phosphodiester at the end of RNA. The mechanism of action of the enzyme occurs in 3 steps: (A) adenylation of the enzyme by ATP; (B) transfer of adenylate to an RNA-N3'P to produce RNA-N3'PP5'A; (C) and attack of the adjacent 2'-hydroxyl on the 3'-phosphorus in the diester linkage to produce the cyclic end product. The biological role of this enzyme is unknown but it is likely to function in some aspects of cellular RNA processing. The chain is RNA 3'-terminal phosphate cyclase (rtcA) from Saccharolobus solfataricus (strain ATCC 35092 / DSM 1617 / JCM 11322 / P2) (Sulfolobus solfataricus).